Reading from the N-terminus, the 488-residue chain is Probable glycine dehydrogenase (decarboxylating) subunit 2 (488 aa).

Lys274 is subject to N6-(pyridoxal phosphate)lysine.

It belongs to the GcvP family. C-terminal subunit subfamily. As to quaternary structure, the glycine cleavage system is composed of four proteins: P, T, L and H. In this organism, the P 'protein' is a heterodimer of two subunits. Pyridoxal 5'-phosphate serves as cofactor.

It catalyses the reaction N(6)-[(R)-lipoyl]-L-lysyl-[glycine-cleavage complex H protein] + glycine + H(+) = N(6)-[(R)-S(8)-aminomethyldihydrolipoyl]-L-lysyl-[glycine-cleavage complex H protein] + CO2. The glycine cleavage system catalyzes the degradation of glycine. The P protein binds the alpha-amino group of glycine through its pyridoxal phosphate cofactor; CO(2) is released and the remaining methylamine moiety is then transferred to the lipoamide cofactor of the H protein. This is Probable glycine dehydrogenase (decarboxylating) subunit 2 from Listeria welshimeri serovar 6b (strain ATCC 35897 / DSM 20650 / CCUG 15529 / CIP 8149 / NCTC 11857 / SLCC 5334 / V8).